The sequence spans 403 residues: 5,7-dihydroxy-2-methylchromone synthase (403 aa).

A CoA-binding site is contributed by His-68. Residue Cys-174 is part of the active site. At Cys-174 the chain carries Cysteine sulfinic acid (-SO2H). CoA-binding positions include Leu-277, Ser-281, and 318 to 321; that span reads GGRA.

This sequence belongs to the thiolase-like superfamily. Chalcone/stilbene synthases family. In terms of assembly, homodimer.

It catalyses the reaction 5 malonyl-CoA + 4 H(+) = 5,7-dihydroxy-2-methyl-4H-chromen-4-one + 5 CO2 + 5 CoA + H2O. It functions in the pathway secondary metabolite biosynthesis; flavonoid biosynthesis. Functionally, catalyzes the iterative condensations of 5 molecules of malonyl-CoA to produce a pentaketide 5,7-dihydroxy-2-methylchromone. This chain is 5,7-dihydroxy-2-methylchromone synthase, found in Aloe arborescens (Kidachi aloe).